Reading from the N-terminus, the 267-residue chain is MNALLTNPFKERLRKGEVQIGLWLSSTTAYMAEIAATSGYDWLLIDGEHAPNTIQDLYHQLQAVAPYASHPVIRPVEGSKPLIKQVLDIGAQTLLIPMVDTADQARQVVSATRYPPYGERGVGASVARAARWGRIENYMAQVNDSLCLLVQVESKTALDNLDEILDVEGIDGVFIGPADLSASLGYPDNAGHPEVQRIIETSIRRIRAAGKAAGFLAVAPDMAQQCLAWGANFVAVGVDTMLYSDALDQRLAMFKSGKNGPRVKGSY.

Histidine 49 acts as the Proton acceptor in catalysis. Residue glutamine 151 participates in substrate binding. Mg(2+) is bound at residue glutamate 153. Substrate is bound by residues alanine 178 and aspartate 179. Aspartate 179 is a Mg(2+) binding site.

Belongs to the HpcH/HpaI aldolase family. KDR aldolase subfamily. In terms of assembly, homohexamer. It depends on Mg(2+) as a cofactor.

It carries out the reaction 2-dehydro-3-deoxy-L-rhamnonate = (S)-lactaldehyde + pyruvate. Its function is as follows. Catalyzes the reversible retro-aldol cleavage of 2-keto-3-deoxy-L-rhamnonate (KDR) to pyruvate and lactaldehyde. The sequence is that of 2-keto-3-deoxy-L-rhamnonate aldolase from Escherichia coli (strain UTI89 / UPEC).